A 282-amino-acid polypeptide reads, in one-letter code: 4-diphosphocytidyl-2-C-methyl-D-erythritol kinase (282 aa).

Lys-11 is a catalytic residue. ATP is bound at residue 93–103 (LVSAGLAGGSA). Asp-133 is a catalytic residue.

It belongs to the GHMP kinase family. IspE subfamily.

It carries out the reaction 4-CDP-2-C-methyl-D-erythritol + ATP = 4-CDP-2-C-methyl-D-erythritol 2-phosphate + ADP + H(+). It functions in the pathway isoprenoid biosynthesis; isopentenyl diphosphate biosynthesis via DXP pathway; isopentenyl diphosphate from 1-deoxy-D-xylulose 5-phosphate: step 3/6. Functionally, catalyzes the phosphorylation of the position 2 hydroxy group of 4-diphosphocytidyl-2C-methyl-D-erythritol. The protein is 4-diphosphocytidyl-2-C-methyl-D-erythritol kinase of Ehrlichia canis (strain Jake).